Reading from the N-terminus, the 416-residue chain is Cell division protein FtsZ (416 aa).

GTP-binding positions include 20–24 (GGGVN), 107–109 (GTG), E138, R142, and D186. A compositionally biased stretch (polar residues) spans 319 to 335 (QETNANNSSPAQRQAES). The tract at residues 319 to 416 (QETNANNSSP…DSLDFPDFLK (98 aa)) is disordered. Acidic residues predominate over residues 376–392 (QDDDIPDDAGFDVDLPA). A compositionally biased stretch (basic and acidic residues) spans 404–416 (ARKDSLDFPDFLK).

It belongs to the FtsZ family. As to quaternary structure, homodimer. Polymerizes to form a dynamic ring structure in a strictly GTP-dependent manner. Interacts directly with several other division proteins.

It localises to the cytoplasm. Functionally, essential cell division protein that forms a contractile ring structure (Z ring) at the future cell division site. The regulation of the ring assembly controls the timing and the location of cell division. One of the functions of the FtsZ ring is to recruit other cell division proteins to the septum to produce a new cell wall between the dividing cells. Binds GTP and shows GTPase activity. This Kocuria rhizophila (strain ATCC 9341 / DSM 348 / NBRC 103217 / DC2201) protein is Cell division protein FtsZ.